The following is a 216-amino-acid chain: Probable nicotinate-nucleotide adenylyltransferase (216 aa).

This sequence belongs to the NadD family.

The catalysed reaction is nicotinate beta-D-ribonucleotide + ATP + H(+) = deamido-NAD(+) + diphosphate. It functions in the pathway cofactor biosynthesis; NAD(+) biosynthesis; deamido-NAD(+) from nicotinate D-ribonucleotide: step 1/1. Its function is as follows. Catalyzes the reversible adenylation of nicotinate mononucleotide (NaMN) to nicotinic acid adenine dinucleotide (NaAD). This chain is Probable nicotinate-nucleotide adenylyltransferase, found in Geobacter sp. (strain M21).